Reading from the N-terminus, the 406-residue chain is Argininosuccinate synthase (406 aa).

Residues 13–21 and A40 contribute to the ATP site; that span reads AYSGGLDTS. L-citrulline contacts are provided by Y91 and S96. Residue G121 coordinates ATP. Positions 123, 127, and 128 each coordinate L-aspartate. N127 provides a ligand contact to L-citrulline. Residues R131, S182, S191, E267, and Y279 each contribute to the L-citrulline site.

The protein belongs to the argininosuccinate synthase family. Type 1 subfamily. As to quaternary structure, homotetramer.

It is found in the cytoplasm. It catalyses the reaction L-citrulline + L-aspartate + ATP = 2-(N(omega)-L-arginino)succinate + AMP + diphosphate + H(+). It functions in the pathway amino-acid biosynthesis; L-arginine biosynthesis; L-arginine from L-ornithine and carbamoyl phosphate: step 2/3. This chain is Argininosuccinate synthase, found in Brucella anthropi (strain ATCC 49188 / DSM 6882 / CCUG 24695 / JCM 21032 / LMG 3331 / NBRC 15819 / NCTC 12168 / Alc 37) (Ochrobactrum anthropi).